A 604-amino-acid chain; its full sequence is Glutamyl-tRNA(Gln) amidotransferase subunit B, mitochondrial (604 aa).

The transit peptide at 1 to 48 (MIRQCLSRRGAYSRYRLAARGVELAEPFHHQSSRPQGRRNWSSSPRCS) directs the protein to the mitochondrion. The interval 28-57 (FHHQSSRPQGRRNWSSSPRCSLDIRTDTPR) is disordered. The span at 33–46 (SRPQGRRNWSSSPR) shows a compositional bias: polar residues.

The protein belongs to the GatB/GatE family. GatB subfamily. In terms of assembly, subunit of the heterotrimeric GatCAB amidotransferase (AdT) complex, composed of A, B and C subunits.

The protein resides in the mitochondrion. The enzyme catalyses L-glutamyl-tRNA(Gln) + L-glutamine + ATP + H2O = L-glutaminyl-tRNA(Gln) + L-glutamate + ADP + phosphate + H(+). Functionally, allows the formation of correctly charged Gln-tRNA(Gln) through the transamidation of misacylated Glu-tRNA(Gln) in the mitochondria. The reaction takes place in the presence of glutamine and ATP through an activated gamma-phospho-Glu-tRNA(Gln). The polypeptide is Glutamyl-tRNA(Gln) amidotransferase subunit B, mitochondrial (Blastomyces gilchristii (strain SLH14081) (Blastomyces dermatitidis)).